The primary structure comprises 109 residues: Somatostatin-2 (109 aa).

Positions 1-16 (MQFLASLVSFLLVVWS) are cleaved as a signal peptide. The propeptide occupies 17 to 80 (VKATALPVED…EPLENKLEER (64 aa)). A disulfide bridge connects residues Cys-98 and Cys-109.

This sequence belongs to the somatostatin family.

Its subcellular location is the secreted. Functionally, somatostatin inhibits the release of somatotropin. The protein is Somatostatin-2 (sst2) of Protopterus annectens (African lungfish).